The chain runs to 121 residues: Small ribosomal subunit protein uS13 (121 aa).

A disordered region spans residues 93 to 121 (RGLPVRGQNTKNNARTRKGPRRTVANKKK). The segment covering 106–121 (ARTRKGPRRTVANKKK) has biased composition (basic residues).

Belongs to the universal ribosomal protein uS13 family. Part of the 30S ribosomal subunit. Forms a loose heterodimer with protein S19. Forms two bridges to the 50S subunit in the 70S ribosome.

Functionally, located at the top of the head of the 30S subunit, it contacts several helices of the 16S rRNA. In the 70S ribosome it contacts the 23S rRNA (bridge B1a) and protein L5 of the 50S subunit (bridge B1b), connecting the 2 subunits; these bridges are implicated in subunit movement. Contacts the tRNAs in the A and P-sites. The sequence is that of Small ribosomal subunit protein uS13 from Bacillus licheniformis (strain ATCC 14580 / DSM 13 / JCM 2505 / CCUG 7422 / NBRC 12200 / NCIMB 9375 / NCTC 10341 / NRRL NRS-1264 / Gibson 46).